Here is a 1014-residue protein sequence, read N- to C-terminus: MICAL-like protein 2 (1014 aa).

Positions 1-107 (MAAIKALQEW…YVSQYYNYFH (107 aa)) constitute a Calponin-homology (CH) domain. Positions 1–261 (MAAIKALQEW…KLSNLASRQP (261 aa)) are forms an intramolecular interaction with the C-terminal coiled coil domain keeping the protein in a closed conformation. Ser-110, Ser-144, and Ser-154 each carry phosphoserine. Positions 114–181 (GMAGMKRPSS…PSPKAAPGTV (68 aa)) are disordered. The LIM zinc-binding domain occupies 187–249 (SICGVCGKHV…THHSSEAVSV (63 aa)). Position 250 is a phosphoserine (Ser-250). The necessary and sufficient for interaction with actinins stretch occupies residues 262–394 (GGGIADTRPI…QGQAASKGVK (133 aa)). The segment at 262 to 810 (GGGIADTRPI…QDDQTRSCKE (549 aa)) is mediates targeting to the cell plasma membrane. Disordered regions lie at residues 311–450 (LTPP…SRVP) and 609–780 (TLPK…RRKK). A compositionally biased stretch (polar residues) spans 332–355 (STVTTTSANSKATTHVTNSSPVGW). Low complexity predominate over residues 356–368 (SSSAQSSTGTSGS). Polar residues predominate over residues 384–398 (PQGQAASKGVKTQLN). 2 stretches are compositionally biased toward low complexity: residues 399 to 419 (SSTD…SSRT) and 438 to 447 (PASSSSSHAS). Composition is skewed to polar residues over residues 624–633 (LSHSTTQAFS) and 646–656 (VGSTSWTSVSL). Composition is skewed to basic and acidic residues over residues 701–711 (EGWRARLKPVD) and 720–737 (LEQK…DTPR). The segment covering 747 to 758 (IHITLTPIQQKR) has biased composition (polar residues). Thr-759 is modified (phosphothreonine). 2 positions are modified to phosphoserine: Ser-773 and Ser-837. Residues 811 to 918 (KTATWGTRES…LMYKSKDQCL (108 aa)) are forms an intramolecular interaction with the N-terminal Calponin-homology and LIM zinc-binding domains-containing region keeping the protein in a closed conformation. Residues 838–985 (PVRLHPNYIS…EQEEDQMLES (148 aa)) form the bMERB domain. The stretch at 845-885 (YISQEELQRQLQDIERQLDALELRGVELEKRLRAAEGDASE) forms a coiled coil. Residues 918–1014 (LEERQLDLQG…WSSKSKSGQT (97 aa)) are mediates interaction with RAB13 and is required for transition from the closed to the open conformation.

Interacts with RAB13 (GTP-bound form); competes with RAB8A and is involved in tight junctions assembly. Interacts with RAB8A; competes with RAB13 and is involved in E-cadherin endocytic recycling. Interacts with RAB8B. Interacts (preferentially in opened conformation) with ACTN1 and ACTN4; stimulated by RAB13 activation. Interacts (via calponin-homology (CH) domain) with the filamins FLNA, FLNB and FLNC (via actin-binding domain).

Its subcellular location is the cell membrane. The protein resides in the cell junction. The protein localises to the tight junction. It is found in the recycling endosome. It localises to the cell projection. Its subcellular location is the neuron projection. The protein resides in the cytoplasm. The protein localises to the cytoskeleton. In terms of biological role, effector of small Rab GTPases which is involved in junctional complexes assembly through the regulation of cell adhesion molecules transport to the plasma membrane and actin cytoskeleton reorganization. Regulates the endocytic recycling of occludins, claudins and E-cadherin to the plasma membrane and may thereby regulate the establishment of tight junctions and adherens junctions. In parallel, may regulate actin cytoskeleton reorganization directly through interaction with F-actin or indirectly through actinins and filamins. Most probably involved in the processes of epithelial cell differentiation, cell spreading and neurite outgrowth. Undergoes liquid-liquid phase separation to form tubular recycling endosomes. Plays 2 sequential roles in the biogenesis of tubular recycling endosomes: first organizes phase separation and then the closed form formed by interaction with RAB8A promotes endosomal tubulation. The polypeptide is MICAL-like protein 2 (Micall2) (Rattus norvegicus (Rat)).